The chain runs to 44 residues: Mu-conotoxin-like Cal 12.1.2f (44 aa).

Disulfide bonds link cysteine 3–cysteine 15, cysteine 10–cysteine 27, cysteine 17–cysteine 32, and cysteine 26–cysteine 38. Residue tryptophan 16 is modified to 6'-bromotryptophan. Proline 22 bears the 4-hydroxyproline mark. A 6'-bromotryptophan mark is found at tryptophan 36 and tryptophan 37. Proline 39 bears the 4-hydroxyproline mark. Position 43 is a 6'-bromotryptophan (tryptophan 43).

As to expression, expressed by the venom duct.

The protein localises to the secreted. In terms of biological role, mu-conotoxins block voltage-gated sodium channels. This toxin reversibly blocks voltage-gated sodium channel in cephalopods, with no alteration in the voltage dependence of sodium conductance or on the kinetics of inactivation. This is Mu-conotoxin-like Cal 12.1.2f from Californiconus californicus (California cone).